Consider the following 185-residue polypeptide: Small ribosomal subunit protein uS4 (185 aa).

An S4 RNA-binding domain is found at 108-170; sequence RRLQTLVYRK…GKSPFVDASH (63 aa).

This sequence belongs to the universal ribosomal protein uS4 family. In terms of assembly, part of the 30S ribosomal subunit. Contacts protein S5. The interaction surface between S4 and S5 is involved in control of translational fidelity.

One of the primary rRNA binding proteins, it binds directly to 16S rRNA where it nucleates assembly of the body of the 30S subunit. Functionally, with S5 and S12 plays an important role in translational accuracy. The sequence is that of Small ribosomal subunit protein uS4 from Methanoregula boonei (strain DSM 21154 / JCM 14090 / 6A8).